The chain runs to 81 residues: Photosystem I iron-sulfur center (81 aa).

2 4Fe-4S ferredoxin-type domains span residues 2 to 31 and 39 to 68; these read SHSVKIYDTCIGCTHCVRACPTDVLEMIPW and IASAPRTEDCVGCKRCESACPTDFLSVRVY. [4Fe-4S] cluster is bound by residues Cys-11, Cys-14, Cys-17, Cys-21, Cys-48, Cys-51, Cys-54, and Cys-58.

The eukaryotic PSI reaction center is composed of at least 11 subunits. The cofactor is [4Fe-4S] cluster.

The protein resides in the plastid. The protein localises to the chloroplast thylakoid membrane. It carries out the reaction reduced [plastocyanin] + hnu + oxidized [2Fe-2S]-[ferredoxin] = oxidized [plastocyanin] + reduced [2Fe-2S]-[ferredoxin]. In terms of biological role, apoprotein for the two 4Fe-4S centers FA and FB of photosystem I (PSI); essential for photochemical activity. FB is the terminal electron acceptor of PSI, donating electrons to ferredoxin. The C-terminus interacts with PsaA/B/D and helps assemble the protein into the PSI complex. Required for binding of PsaD and PsaE to PSI. PSI is a plastocyanin-ferredoxin oxidoreductase, converting photonic excitation into a charge separation, which transfers an electron from the donor P700 chlorophyll pair to the spectroscopically characterized acceptors A0, A1, FX, FA and FB in turn. The polypeptide is Photosystem I iron-sulfur center (Zea mays (Maize)).